Reading from the N-terminus, the 152-residue chain is Large ribosomal subunit protein uL15 (152 aa).

The segment at 1 to 57 is disordered; the sequence is MTSTLNTLKSNSGSRKKKLRKGRGIAAGQGASCGFGMRGQKSRSGRPTRPGFEGGQM. Residues 14–23 are compositionally biased toward basic residues; the sequence is SRKKKLRKGR. Gly residues predominate over residues 25 to 37; sequence IAAGQGASCGFGM.

The protein belongs to the universal ribosomal protein uL15 family. Part of the 50S ribosomal subunit.

In terms of biological role, binds to the 23S rRNA. This chain is Large ribosomal subunit protein uL15, found in Prochlorococcus marinus (strain MIT 9215).